The following is a 387-amino-acid chain: MSNGAFDAIFEYAWGQIDKPISGDFIYGKDLPKLIEIIENIFQKAQKSGSYELRLPLFSEINKDLFRTFSNTKTFFKIHKEEFDDIFFNLVNHPLREILENAFIGVDSIPSDFIVSMNLNSPSKFLVENKNKNTEGAGISTPRKKLTESPIKLLSRKNIGKALEVQVEELKRELTAKQSLLQENERQVSELKIRLETYQEKYASIQQRFSDLQKARQVEDNQNSSRTSDPGSPLVTGIDQKAILEEFRRRLQRQTDTISFLKDQIRRERGLNCSNDKVSHSKRKHATTDGDGTFKNFISAVPSNIWVKATIRIIVCFALLAGVLPYIRKYVYAHDTPSQNSRLQLSWWENSGILSKIVWFFEDQTDLETEYRSNANVDDAYSRVFGI.

Residues 157–269 are a coiled coil; that stretch reads KNIGKALEVQ…FLKDQIRRER (113 aa). The disordered stretch occupies residues 216–235; sequence RQVEDNQNSSRTSDPGSPLV. A compositionally biased stretch (polar residues) spans 220–230; the sequence is DNQNSSRTSDP. The chain crosses the membrane as a helical span at residues 311 to 327; the sequence is IRIIVCFALLAGVLPYI.

Belongs to the MPS2 family. In terms of assembly, interacts with BBP1, MPS3, and SPC24.

Its subcellular location is the nucleus membrane. The protein localises to the cytoplasm. It localises to the cytoskeleton. It is found in the microtubule organizing center. The protein resides in the spindle pole body. Component of the spindle pole body (SPB) required for insertion of the nascent SPB into the nuclear envelope and for the proper execution of spindle pole body (SPB) duplication. The polypeptide is Monopolar spindle protein 2 (MPS2) (Saccharomyces cerevisiae (strain FostersB) (Baker's yeast)).